Reading from the N-terminus, the 576-residue chain is Zinc finger protein 791 (576 aa).

One can recognise a KRAB domain in the interval 4–90; sequence VAFKDVSVSF…AETFSPNLSV (87 aa). 17 consecutive C2H2-type zinc fingers follow at residues 100-122, 132-154, 160-182, 188-210, 216-238, 244-266, 272-294, 300-322, 328-350, 356-378, 384-406, 412-434, 440-462, 468-490, 496-518, 524-546, and 552-574; these read YECT…MRSH, YKCK…ERSH, YKCK…EQTH, YECK…ERIH, YECK…ERTH, YACK…MITH, YKCK…ERIH, YTCK…ERIH, YKCK…VRVH, YKCK…ERTH, YECK…KRNH, YECK…MITH, YKCR…ERTH, YECK…KRTH, YECK…MRMH, YKCK…TRIH, and LECK…MRMH.

Belongs to the krueppel C2H2-type zinc-finger protein family.

It localises to the nucleus. Functionally, may be involved in transcriptional regulation. In Pongo abelii (Sumatran orangutan), this protein is Zinc finger protein 791 (ZNF791).